Reading from the N-terminus, the 100-residue chain is Urease subunit gamma (100 aa).

The protein belongs to the urease gamma subunit family. In terms of assembly, heterotrimer of UreA (gamma), UreB (beta) and UreC (alpha) subunits. Three heterotrimers associate to form the active enzyme.

Its subcellular location is the cytoplasm. The enzyme catalyses urea + 2 H2O + H(+) = hydrogencarbonate + 2 NH4(+). It participates in nitrogen metabolism; urea degradation; CO(2) and NH(3) from urea (urease route): step 1/1. In Opitutus terrae (strain DSM 11246 / JCM 15787 / PB90-1), this protein is Urease subunit gamma.